Here is a 90-residue protein sequence, read N- to C-terminus: Barrier-to-autointegration factor (90 aa).

2 positions are modified to phosphoserine: S2 and S3. A Phosphothreonine modification is found at T4. S5 bears the Phosphoserine mark.

It belongs to the BAF family. As to quaternary structure, homodimer.

Its subcellular location is the nucleus. The protein localises to the chromosome. It localises to the nucleus envelope. The protein resides in the cytoplasm. In terms of biological role, non-specific DNA-binding protein that plays key roles in mitotic nuclear reassembly, chromatin organization, DNA damage response, gene expression and intrinsic immunity against foreign DNA. Contains two non-specific double-stranded DNA (dsDNA)-binding sites which promote DNA cross-bridging. Plays a key role in nuclear membrane reformation at the end of mitosis by driving formation of a single nucleus in a spindle-independent manner. Transiently cross-bridges anaphase chromosomes via its ability to bridge distant DNA sites, leading to the formation of a dense chromatin network at the chromosome ensemble surface that limits membranes to the surface. Also acts as a negative regulator of innate immune activation by restricting CGAS activity toward self-DNA upon acute loss of nuclear membrane integrity. Outcompetes CGAS for DNA-binding, thereby preventing CGAS activation and subsequent damaging autoinflammatory responses. Also involved in DNA damage response; acts by inhibiting the ADP-ribosyltransferase activity of PARP1. Involved in the recognition of exogenous dsDNA in the cytosol: associates with exogenous dsDNA immediately after its appearance in the cytosol at endosome breakdown and is required to avoid autophagy. The protein is Barrier-to-autointegration factor (banf1) of Danio rerio (Zebrafish).